We begin with the raw amino-acid sequence, 347 residues long: NADH-ubiquinone oxidoreductase chain 2 (347 aa).

Transmembrane regions (helical) follow at residues 13-33 (IFTGTLITALSSHWFFTWVGL), 60-80 (FLTQATASMILLMAILSNSML), 96-116 (LMIMMAMAMKLGMAPFHFWVP), 123-143 (PLMSGLLLLTWQKLAPISIMY), 149-169 (LNVNLLLTLSILSIMAGSWGG), 178-198 (ILAYSSITHMGWMMAVLPYNP), 201-221 (TILNLTIYIILTTTAFLLLNL), 247-267 (TLLSLGGLPPLTGFLPKWVII), 274-294 (NSLIIPTIMAIITLLNLYFYL), and 326-346 (LPTLITLTTLLLPISPFMLMI).

The protein belongs to the complex I subunit 2 family. Core subunit of respiratory chain NADH dehydrogenase (Complex I) which is composed of 45 different subunits. Interacts with TMEM242.

The protein localises to the mitochondrion inner membrane. The catalysed reaction is a ubiquinone + NADH + 5 H(+)(in) = a ubiquinol + NAD(+) + 4 H(+)(out). Functionally, core subunit of the mitochondrial membrane respiratory chain NADH dehydrogenase (Complex I) which catalyzes electron transfer from NADH through the respiratory chain, using ubiquinone as an electron acceptor. Essential for the catalytic activity and assembly of complex I. The polypeptide is NADH-ubiquinone oxidoreductase chain 2 (Pan troglodytes (Chimpanzee)).